A 1020-amino-acid chain; its full sequence is Sodium/potassium-transporting ATPase subunit alpha-2 (1020 aa).

The propeptide occupies Met-1 to Ala-5. The disordered stretch occupies residues Met-1–Asp-31. Over Gly-6–Pro-85 the chain is Cytoplasmic. Residue Ser-10 is modified to Phosphoserine. The segment at Pro-80–Pro-82 is interaction with phosphoinositide-3 kinase. Residues Glu-86–Ala-106 traverse the membrane as a helical segment. The Extracellular portion of the chain corresponds to Ile-107 to Tyr-129. The chain crosses the membrane as a helical span at residues Leu-130–Ala-150. Residues Lys-151–Ile-286 are Cytoplasmic-facing. A compositionally biased stretch (polar residues) spans Asp-212–Pro-227. The disordered stretch occupies residues Asp-212 to His-231. The chain crosses the membrane as a helical span at residues Glu-287–Val-306. Residues Leu-307–Ala-318 lie on the Extracellular side of the membrane. Residues Val-319–Ala-336 traverse the membrane as a helical segment. Over Thr-337–Leu-769 the chain is Cytoplasmic. Asp-374 serves as the catalytic 4-aspartylphosphate intermediate. Phosphoserine is present on residues Ser-439, Ser-450, Ser-496, and Ser-559. Thr-570 carries the phosphothreonine modification. Phosphoserine is present on residues Ser-587 and Ser-672. Mg(2+) is bound by residues Asp-714 and Asp-718. A helical membrane pass occupies residues Lys-770–Leu-789. Residues Phe-790–Leu-799 lie on the Extracellular side of the membrane. A helical transmembrane segment spans residues Gly-800–Ala-820. Topologically, residues Tyr-821–Lys-840 are cytoplasmic. A Phosphoserine modification is found at Ser-826. The chain crosses the membrane as a helical span at residues Leu-841 to Phe-863. The Extracellular portion of the chain corresponds to Phe-864–Cys-915. Residues His-916–Lys-935 form a helical membrane-spanning segment. Residues Thr-936 to Asn-948 are Cytoplasmic-facing. Ser-940 carries the phosphoserine; by PKA modification. Residues Lys-949–Tyr-967 traverse the membrane as a helical segment. The Extracellular portion of the chain corresponds to Cys-968 to Val-982. Residues Thr-983–Lys-1003 form a helical membrane-spanning segment. Residues Leu-1004–Tyr-1020 are Cytoplasmic-facing.

This sequence belongs to the cation transport ATPase (P-type) (TC 3.A.3) family. Type IIC subfamily. As to quaternary structure, the sodium/potassium-transporting ATPase is composed of a catalytic alpha subunit, an auxiliary non-catalytic beta subunit and an additional regulatory subunit. Interacts with regulatory subunit FXYD1.

Its subcellular location is the membrane. The protein resides in the cell membrane. It carries out the reaction K(+)(out) + Na(+)(in) + ATP + H2O = K(+)(in) + Na(+)(out) + ADP + phosphate + H(+). Functionally, this is the catalytic component of the active enzyme, which catalyzes the hydrolysis of ATP coupled with the exchange of sodium and potassium ions across the plasma membrane. This action creates the electrochemical gradient of sodium and potassium, providing the energy for active transport of various nutrients. In Homo sapiens (Human), this protein is Sodium/potassium-transporting ATPase subunit alpha-2 (ATP1A2).